The following is a 472-amino-acid chain: GTPase Der (472 aa).

EngA-type G domains are found at residues 3–166 (PVIA…PEQE) and 176–349 (IRIG…DSAM). GTP is bound by residues 9 to 16 (GRPNVGKS), 56 to 60 (DTGGI), 118 to 121 (NKID), 182 to 189 (GRPNVGKS), 229 to 233 (DTAGV), and 294 to 297 (NKWD). The 85-residue stretch at 350–434 (AKWSTNQLTT…PIRFEFRSGE (85 aa)) folds into the KH-like domain. The interval 433–472 (GENPFAGKKNKLSPRQQKKKERLMKHVKKLKHKQKRKKSR) is disordered. Basic residues predominate over residues 440-472 (KKNKLSPRQQKKKERLMKHVKKLKHKQKRKKSR).

It belongs to the TRAFAC class TrmE-Era-EngA-EngB-Septin-like GTPase superfamily. EngA (Der) GTPase family. As to quaternary structure, associates with the 50S ribosomal subunit.

In terms of biological role, GTPase that plays an essential role in the late steps of ribosome biogenesis. This Hahella chejuensis (strain KCTC 2396) protein is GTPase Der.